The chain runs to 165 residues: NADPH-dependent 7-cyano-7-deazaguanine reductase (165 aa).

Residue C56 is the Thioimide intermediate of the active site. Residue D63 is the Proton donor of the active site. Residues 78 to 80 (VES) and 97 to 98 (HE) contribute to the substrate site.

Belongs to the GTP cyclohydrolase I family. QueF type 1 subfamily.

It is found in the cytoplasm. The enzyme catalyses 7-aminomethyl-7-carbaguanine + 2 NADP(+) = 7-cyano-7-deazaguanine + 2 NADPH + 3 H(+). It functions in the pathway tRNA modification; tRNA-queuosine biosynthesis. Is totally inhibited by 4-aminobenzylcyanide in vitro. Functionally, catalyzes the NADPH-dependent reduction of 7-cyano-7-deazaguanine (preQ0) to 7-aminomethyl-7-deazaguanine (preQ1), a late step in the queuosine pathway. Is highly specific for its natural substrate preQ0, since it cannot use various aliphatic, aromatic and heterocyclic nitriles, although it can reduce the substrate analog 5-cyanopyrrolo[2,3-d]pyrimidin-4-one with lesser efficiency. The chain is NADPH-dependent 7-cyano-7-deazaguanine reductase from Geobacillus kaustophilus (strain HTA426).